We begin with the raw amino-acid sequence, 285 residues long: 4-diphosphocytidyl-2-C-methyl-D-erythritol kinase (285 aa).

Residue Lys-10 is part of the active site. Residue 94 to 104 (PVAAGLGGGSS) participates in ATP binding. Asp-136 is a catalytic residue.

The protein belongs to the GHMP kinase family. IspE subfamily.

It carries out the reaction 4-CDP-2-C-methyl-D-erythritol + ATP = 4-CDP-2-C-methyl-D-erythritol 2-phosphate + ADP + H(+). It participates in isoprenoid biosynthesis; isopentenyl diphosphate biosynthesis via DXP pathway; isopentenyl diphosphate from 1-deoxy-D-xylulose 5-phosphate: step 3/6. Functionally, catalyzes the phosphorylation of the position 2 hydroxy group of 4-diphosphocytidyl-2C-methyl-D-erythritol. The polypeptide is 4-diphosphocytidyl-2-C-methyl-D-erythritol kinase (Latilactobacillus sakei subsp. sakei (strain 23K) (Lactobacillus sakei subsp. sakei)).